Consider the following 261-residue polypeptide: MYLEKEQLPYFNEWAECFCQYLPDFSIRVTSRAEGSHHKIKIRLHFKGQSHFFHVVQDLNQMVNEQRHKHKNKSAANSARVPANAVYIVKLSQIDQHWFLQPPRAKGLLFEQDDDLFWPLDPRVIKLKGRPRGATTKSVLRTPKRRRVIRKKVTDITEEEEVVEAPQSSGSLNAATMRLFQQVLHQEMTPMQAQVQALQDRIDSSVVNISDNKKKVEEEGLRSFDDEFFSPKHVQAVQLSYGTRSHTPAATQRRGQGRGCG.

A compositionally biased stretch (polar residues) spans 242 to 254 (GTRSHTPAATQRR). Residues 242 to 261 (GTRSHTPAATQRRGQGRGCG) are disordered.

It functions in the pathway secondary metabolite biosynthesis. In terms of biological role, part of the gene cluster that mediates the biosynthesis of squalestatin S1 (SQS1, also known as zaragozic acid A), a heavily oxidized fungal polyketide that offers potent cholesterol lowering activity by targeting squalene synthase (SS). SQS1 is composed of a 2,8-dioxobicyclic[3.2.1]octane-3,4,5-tricarboxyclic acid core that is connected to two lipophilic polyketide arms. These initial steps feature the priming of an unusual benzoic acid starter unit onto the highly reducing polyketide synthase clz14, followed by oxaloacetate extension and product release to generate a tricarboxylic acid containing product. The phenylalanine ammonia lyase (PAL) clz10 and the acyl-CoA ligase clz12 are involved in transforming phenylalanine into benzoyl-CoA. The citrate synthase-like protein clz17 is involved in connecting the C-alpha-carbons of the hexaketide chain and oxaloacetate to afford the tricarboxylic acid unit. The potential hydrolytic enzymes, clz11 and clz13, are in close proximity to pks2 and may participate in product release. On the other side, the tetraketide arm is synthesized by a the squalestatin tetraketide synthase clz2 and enzymatically esterified to the core in the last biosynthetic step, by the acetyltransferase clz6. The biosynthesis of the tetraketide must involve 3 rounds of chain extension. After the first and second rounds methyl-transfer occurs, and in all rounds of extension the ketoreductase and dehydratase are active. The enoyl reductase and C-MeT of clz2 are not active in the final round of extension. The acetyltransferase clz6 appears to have a broad substrate selectivity for its acyl CoA substrate, allowing the in vitro synthesis of novel squalestatins. The biosynthesis of SQS1 requires several oxidative steps likely performed by oxidoreductases clz3, clz15 and clz16. Finally, in support of the identification of the cluster as being responsible for SQS1 production, the cluster contains a gene encoding a putative squalene synthase (SS) clz20, suggesting a likely mechanism for self-resistance. The polypeptide is Zaragozic acid A biosynthesis cluster protein 8 (Cochliobolus lunatus (Filamentous fungus)).